The primary structure comprises 605 residues: Elongation factor 4 (605 aa).

The 183-residue stretch at 5–187 folds into the tr-type G domain; sequence ALIRNFSIIA…AVVERIPPPK (183 aa). Residues 17 to 22 and 134 to 137 contribute to the GTP site; these read DHGKST and NKID.

Belongs to the TRAFAC class translation factor GTPase superfamily. Classic translation factor GTPase family. LepA subfamily.

It is found in the cell inner membrane. It carries out the reaction GTP + H2O = GDP + phosphate + H(+). Required for accurate and efficient protein synthesis under certain stress conditions. May act as a fidelity factor of the translation reaction, by catalyzing a one-codon backward translocation of tRNAs on improperly translocated ribosomes. Back-translocation proceeds from a post-translocation (POST) complex to a pre-translocation (PRE) complex, thus giving elongation factor G a second chance to translocate the tRNAs correctly. Binds to ribosomes in a GTP-dependent manner. The chain is Elongation factor 4 from Novosphingobium aromaticivorans (strain ATCC 700278 / DSM 12444 / CCUG 56034 / CIP 105152 / NBRC 16084 / F199).